Reading from the N-terminus, the 370-residue chain is Peptide chain release factor 1 (370 aa).

Q239 carries the N5-methylglutamine modification.

The protein belongs to the prokaryotic/mitochondrial release factor family. Methylated by PrmC. Methylation increases the termination efficiency of RF1.

It localises to the cytoplasm. In terms of biological role, peptide chain release factor 1 directs the termination of translation in response to the peptide chain termination codons UAG and UAA. The chain is Peptide chain release factor 1 from Bacteroides thetaiotaomicron (strain ATCC 29148 / DSM 2079 / JCM 5827 / CCUG 10774 / NCTC 10582 / VPI-5482 / E50).